We begin with the raw amino-acid sequence, 634 residues long: Threonine--tRNA ligase (634 aa).

Positions 1–61 (MINIRFPDGS…NSNCELRLIT (61 aa)) constitute a TGS domain. Residues 241-532 (DHRKIGKVLD…LIEHYAGNLP (292 aa)) are catalytic. 3 residues coordinate Zn(2+): C332, H383, and H509.

This sequence belongs to the class-II aminoacyl-tRNA synthetase family. In terms of assembly, homodimer. Zn(2+) serves as cofactor.

The protein localises to the cytoplasm. The enzyme catalyses tRNA(Thr) + L-threonine + ATP = L-threonyl-tRNA(Thr) + AMP + diphosphate + H(+). In terms of biological role, catalyzes the attachment of threonine to tRNA(Thr) in a two-step reaction: L-threonine is first activated by ATP to form Thr-AMP and then transferred to the acceptor end of tRNA(Thr). Also edits incorrectly charged L-seryl-tRNA(Thr). This Francisella tularensis subsp. holarctica (strain FTNF002-00 / FTA) protein is Threonine--tRNA ligase.